Reading from the N-terminus, the 416-residue chain is Orexin/Hypocretin receptor type 1 (416 aa).

The interval 1 to 22 (MEPSATPGAQPGVPTSSGEPFH) is disordered. Topologically, residues 1–46 (MEPSATPGAQPGVPTSSGEPFHLPPDYEDEFLRYLWRDYLYPKQYE) are extracellular. Residues 26–41 (DYEDEFLRYLWRDYLY) are required for response to orexin-A. Residues 47–67 (WVLIAAYVAVFLIALVGNTLV) form a helical membrane-spanning segment. Over 68–82 (CLAVWRNHHMRTVTN) the chain is Cytoplasmic. The helical transmembrane segment at 83-105 (YFIVNLSLADVLVTAICLPASLL) threads the bilayer. Residues 106–119 (VDITESWLFGHALC) are Extracellular-facing. Cys119 and Cys202 are oxidised to a cystine. The helical transmembrane segment at 120–140 (KVIPYLQAVSVSVAVLTLSFI) threads the bilayer. The Cytoplasmic portion of the chain corresponds to 141 to 160 (ALDRWYAICHPLLFKSTARR). A helical transmembrane segment spans residues 161–182 (ARGSILGIWAVSLAVMVPQAAV). Residues 183 to 213 (MECSSVLPELANRTRLFSVCDERWADELYPK) lie on the Extracellular side of the membrane. An N-linked (GlcNAc...) asparagine glycan is attached at Asn194. Residues 214-235 (IYHSCFFFVTYLAPLGLMGMAY) traverse the membrane as a helical segment. The Cytoplasmic portion of the chain corresponds to 236–298 (FQIFRKLWGP…QMRARRKTAK (63 aa)). The chain crosses the membrane as a helical span at residues 299-321 (MLMVVLLVFALCYLPISVLNVLK). Residues 322 to 336 (RVFGMFRQASDREAV) lie on the Extracellular side of the membrane. The chain crosses the membrane as a helical span at residues 337 to 360 (YACFTFSHWLVYANSAANPIIYNF). The Cytoplasmic portion of the chain corresponds to 361 to 416 (LSGKFREQFKAAFSCCLPGLGPSSSARHKSLSLQSRCSVSKVSEHVVLTTVTTVLS).

The protein belongs to the G-protein coupled receptor 1 family. Highly expressed in the brain in the prefrontal cortex, hippocampus, paraventricular thalamus, ventromedial hypothalamus, arcuate nucleus, dorsal raphe nucleus, and locus coeruleus. Not detected in the spleen, lung, liver, skeletal muscle, kidney and testis. Orexin receptor mRNA expression has also been reported in the adrenal gland, enteric nervous system, and pancreas.

It is found in the cell membrane. Moderately selective excitatory receptor for orexin-A and, with a lower affinity, for orexin-B neuropeptide. Triggers an increase in cytoplasmic Ca(2+) levels in response to orexin-A binding. The polypeptide is Orexin/Hypocretin receptor type 1 (Rattus norvegicus (Rat)).